We begin with the raw amino-acid sequence, 131 residues long: Small ribosomal subunit protein bS6 (131 aa).

The tract at residues 99–131 (ASPMVKAKDERRERREDFATETNEDSDAGDSEE) is disordered. The segment covering 104-116 (KAKDERRERREDF) has biased composition (basic and acidic residues). Residues 120 to 131 (TNEDSDAGDSEE) are compositionally biased toward acidic residues.

It belongs to the bacterial ribosomal protein bS6 family.

In terms of biological role, binds together with bS18 to 16S ribosomal RNA. The sequence is that of Small ribosomal subunit protein bS6 from Sodalis glossinidius (strain morsitans).